A 706-amino-acid chain; its full sequence is MGRKVTVATCALNQWALDFEGNLQRILKSIEIAKNRGARYRLGPELEICGYGCWDHYYESDTLLHSFQVLAALVESPVTQDIICDVGMPVMHRNVRYNCRVIFLNRKILLIRPKMALANEGNYRELRWFTPWSRSRHTEEYFLPRMIQDLTKQETVPFGDAVLVTWDTCIGSEICEELWTPHSPHIDMGLDGVEIITNASGSHQVLRKANTRVDLVTMVTSKNGGIYLLANQKGCDGDRLYYDGCAMIAMNGSVFAQGSQFSLDDVEVLTATLDLEDVRSYRAEISSRNLAASRASPYPRVKVDFALSCHEDLLAPISEPIEWKYHSPEEEISLGPACWLWDFLRRSQQAGFLLPLSGGVDSAATACLIYSMCCQVCEAVRSGNEEVLADVRTIVNQISYTPQDPRDLCGRILTTCYMASKNSSQETCTRARELAQQIGSHHISLNIDPAVKAVMGIFSLVTGKSPLFAAHGGSSRENLALQNVQARIRMVLAYLFAQLSLWSRGVHGGLLVLGSANVDESLLGYLTKYDCSSADINPIGGISKTDLRAFVQFCIQRFQLPALQSILLAPATAELEPLADGQVSQTDEEDMGMTYAELSVYGKLRKVAKMGPYSMFCKLLGMWRHICTPRQVADKVKRFFSKYSMNRHKMTTLTPAYHAENYSPEDNRFDLRPFLYNTSWPWQFRCIENQVLQLERAEPQSLDGVD.

The region spanning 5–275 (VTVATCALNQ…VEVLTATLDL (271 aa)) is the CN hydrolase domain. Glu-45 (proton acceptor; for glutaminase activity) is an active-site residue. Lys-114 serves as the catalytic For glutaminase activity. Residue Cys-175 is the Nucleophile; for glutaminase activity of the active site. Positions 325 to 706 (YHSPEEEISL…AEPQSLDGVD (382 aa)) are ligase. 355–362 (PLSGGVDS) is a binding site for ATP. Ser-357 is an active-site residue.

In the C-terminal section; belongs to the NAD synthetase family. Homohexamer.

It carries out the reaction deamido-NAD(+) + L-glutamine + ATP + H2O = L-glutamate + AMP + diphosphate + NAD(+) + H(+). It participates in cofactor biosynthesis; NAD(+) biosynthesis; NAD(+) from deamido-NAD(+) (L-Gln route): step 1/1. Its function is as follows. Catalyzes the final step of the nicotinamide adenine dinucleotide (NAD) de novo synthesis pathway, the ATP-dependent amidation of deamido-NAD using L-glutamine as a nitrogen source. In Homo sapiens (Human), this protein is Glutamine-dependent NAD(+) synthetase (NADSYN1).